The following is a 495-amino-acid chain: MVSEITHKSYPLHFVLFPFMAQGHMIPMVDIARLLAQRGVKITIVTTPHNAARFENVLNRAIESGLPISIVQVKLPSQEAGLPEGNETFDSLVSMELLVPFFKSVNMLEEPVQKLFEEMSPQPSCIISDFCLPYTSKIAKKFNIPKILFHGMCCFCLLCMHVLRKNHEIVENLKSDKEHFVVPYFPDRVEFTRPQVPVATYVPGDWHEITGDMVEADKTSYGVIVNTCQELEPAYANDYKEARSGKAWTIGPVSLCNKVGADKAERGNKADIDQDECLKWLNSKEEGSVLYVCLGSICNLPLSQLKELGLGLEESQRPFIWVIRGWEKNKELLEWFSESGFEERIKDRGLLIKGWAPQMLILSHHSVGGFLTHCGWNSTLEGLTAGLPLLTWPLFADQFCNEKLAVQVLKAGVSAGVDQPMKWGEEEKIGVLVDKEGVKKAVEELMGESDDAKEIRRRAKELGELAHKAVEEGGSSHSNITSLLEDIMQLAQSNN.

The active-site Proton acceptor is His-24. His-24 contributes to the an anthocyanidin binding site. The active-site Charge relay is the Asp-129. UDP-alpha-D-glucose-binding residues include Ala-356, Gln-358, His-373, Trp-376, Asn-377, Ser-378, and Glu-381. Ala-396 provides a ligand contact to an anthocyanidin. UDP-alpha-D-glucose contacts are provided by Asp-397 and Gln-398.

Belongs to the UDP-glycosyltransferase family.

The enzyme catalyses oleanolate + UDP-alpha-D-glucose = oleanolate 3-O-beta-D-glucoside + UDP + H(+). Functionally, catalyzes the transfer of a glucose (Glc) moiety from UDP-Glc to the C-3 position of the oleanane sapogenins oleanolate and hederagenin, and to the C-28 carboxylic group of the lupane sapogenin betulinate. The monoglucosylated hederagenin 3-O-beta-D-glucoside is a feeding deterrent of the yellow-striped flea beetle (Phyllotreta nemorum). The chain is UDP-glycosyltransferase 73C13 from Barbarea vulgaris (Yellow rocket).